We begin with the raw amino-acid sequence, 445 residues long: Tubulin beta-3 chain (445 aa).

Positions 11, 69, 138, 142, 143, 144, 204, and 226 each coordinate GTP. Glutamate 69 provides a ligand contact to Mg(2+). Residues 421 to 445 are disordered; it reads EYQQYQDATADEEEEYDEEEEEEAA. The span at 429–445 shows a compositional bias: acidic residues; it reads TADEEEEYDEEEEEEAA.

It belongs to the tubulin family. Dimer of alpha and beta chains. A typical microtubule is a hollow water-filled tube with an outer diameter of 25 nm and an inner diameter of 15 nM. Alpha-beta heterodimers associate head-to-tail to form protofilaments running lengthwise along the microtubule wall with the beta-tubulin subunit facing the microtubule plus end conferring a structural polarity. Microtubules usually have 13 protofilaments but different protofilament numbers can be found in some organisms and specialized cells. The cofactor is Mg(2+).

The protein resides in the cytoplasm. It is found in the cytoskeleton. Tubulin is the major constituent of microtubules, a cylinder consisting of laterally associated linear protofilaments composed of alpha- and beta-tubulin heterodimers. Microtubules grow by the addition of GTP-tubulin dimers to the microtubule end, where a stabilizing cap forms. Below the cap, tubulin dimers are in GDP-bound state, owing to GTPase activity of alpha-tubulin. The protein is Tubulin beta-3 chain (TUBB3) of Triticum aestivum (Wheat).